The following is a 188-amino-acid chain: Molybdopterin synthase catalytic subunit (188 aa).

Residues 1–14 (MTTQPPQDQTSTTP) show a composition bias toward low complexity. The disordered stretch occupies residues 1-23 (MTTQPPQDQTSTTPSLPPHLDPT). Substrate-binding positions include 134–135 (HR), Lys-150, and 157–159 (KRE).

The protein belongs to the MoaE family. MOCS2B subfamily. As to quaternary structure, heterotetramer; composed of 2 small (MOCS2A) and 2 large (MOCS2B) subunits.

It is found in the cytoplasm. The catalysed reaction is 2 [molybdopterin-synthase sulfur-carrier protein]-C-terminal-Gly-aminoethanethioate + cyclic pyranopterin phosphate + H2O = molybdopterin + 2 [molybdopterin-synthase sulfur-carrier protein]-C-terminal Gly-Gly + 2 H(+). It participates in cofactor biosynthesis; molybdopterin biosynthesis. Its function is as follows. Catalytic subunit of the molybdopterin synthase complex, a complex that catalyzes the conversion of precursor Z into molybdopterin. Acts by mediating the incorporation of 2 sulfur atoms from thiocarboxylated MOCS2A into precursor Z to generate a dithiolene group. The sequence is that of Molybdopterin synthase catalytic subunit from Neosartorya fischeri (strain ATCC 1020 / DSM 3700 / CBS 544.65 / FGSC A1164 / JCM 1740 / NRRL 181 / WB 181) (Aspergillus fischerianus).